A 198-amino-acid polypeptide reads, in one-letter code: MEVILLERVAKLGQMGEVVKVKHGFARNFLLPRGKALRATTDNRAKYEHMKADLEARNIEAKAEAIKVAEKIDGRNVVVLRQASETGQLFGSVTVRDIISQFTADGVHIERSQVLLDHPVKTIGKHSISIAVHPEVEVSVSVTVARSALEAERINRGEDISTRQEDQDAAAEALAAAGEFFDPEAHNDGEQEEEAGDK.

Positions 156–166 are enriched in basic and acidic residues; that stretch reads RGEDISTRQED. Residues 156–198 are disordered; it reads RGEDISTRQEDQDAAAEALAAAGEFFDPEAHNDGEQEEEAGDK.

Belongs to the bacterial ribosomal protein bL9 family.

Its function is as follows. Binds to the 23S rRNA. In Rhodopseudomonas palustris (strain BisB18), this protein is Large ribosomal subunit protein bL9.